Consider the following 182-residue polypeptide: Ribulose bisphosphate carboxylase small subunit, chloroplastic (182 aa).

A chloroplast-targeting transit peptide spans 1–58 (MASSMISSATIATVNCSSPAQANMVAPFTGLKSASAFPVTRKANNDITSLASNGGRVQ).

It belongs to the RuBisCO small chain family. In terms of assembly, heterohexadecamer of 8 large and 8 small subunits.

The protein localises to the plastid. It localises to the chloroplast. In terms of biological role, ruBisCO catalyzes two reactions: the carboxylation of D-ribulose 1,5-bisphosphate, the primary event in carbon dioxide fixation, as well as the oxidative fragmentation of the pentose substrate. Both reactions occur simultaneously and in competition at the same active site. Although the small subunit is not catalytic it is essential for maximal activity. This chain is Ribulose bisphosphate carboxylase small subunit, chloroplastic, found in Gossypium hirsutum (Upland cotton).